The primary structure comprises 466 residues: Catalase ifgD (466 aa).

Residues 1–22 (MAPNYAKKCPVMGKAPSSGHSS) are disordered. Residue H48 is part of the active site. Y337 is a heme binding site.

This sequence belongs to the catalase family. Requires heme as cofactor.

It participates in alkaloid biosynthesis; ergot alkaloid biosynthesis. Its function is as follows. Catalase; part of the gene cluster that mediates the biosynthesis of isofumigaclavines, fungal ergot alkaloids. The tryptophan dimethylallyltransferase ifgA catalyzes the first step of ergot alkaloid biosynthesis by condensing dimethylallyl diphosphate (DMAP) and tryptophan to form 4-dimethylallyl-L-tryptophan. The second step is catalyzed by the methyltransferase ifgB that methylates 4-dimethylallyl-L-tryptophan in the presence of S-adenosyl-L-methionine, resulting in the formation of N-methyl-dimethylallyl-L-tryptophan. The catalase ifgD and the FAD-dependent oxidoreductase ifgC then transform N-methyl-dimethylallyl-L-tryptophan to chanoclavine-I which is further oxidized by ifgE in the presence of NAD(+), resulting in the formation of chanoclavine-I aldehyde. The chanoclavine-I aldehyde reductases ifgG and/or fgaOx3 reduce chanoclavine-I aldehyde to dihydrochanoclavine-I aldehyde that spontaneously dehydrates to form 6,8-dimethyl-6,7-didehydroergoline. The festuclavine dehydrogenases ifgF1 and/or ifgF2 then catalyze the reduction of 6,8-dimethyl-6,7-didehydroergoline to form festuclavine. Hydrolysis of festuclavine by a yet undetermined cytochrome P450 monooxygenase (called ifgH) then leads to the formation of isofumigaclavine B which is in turn acetylated by ifgI to isofumigaclavine A. Penicillium roqueforti has interestingly at least two sets of genes for the consumption of chanoclavine-I aldehyde on three different loci, the OYEs ifgG/fgaOx3 and the festuclavine synthase homologs ifgF1/ifgF2. The reason for the duplication of these genes is unclear, probably to ensure the conversion of chanoclavine-I aldehyde by differential gene expression under various environmental conditions. The chain is Catalase ifgD from Penicillium roqueforti (strain FM164).